Reading from the N-terminus, the 96-residue chain is Putative pterin-4-alpha-carbinolamine dehydratase (96 aa).

This sequence belongs to the pterin-4-alpha-carbinolamine dehydratase family.

It catalyses the reaction (4aS,6R)-4a-hydroxy-L-erythro-5,6,7,8-tetrahydrobiopterin = (6R)-L-erythro-6,7-dihydrobiopterin + H2O. The sequence is that of Putative pterin-4-alpha-carbinolamine dehydratase from Prochlorococcus marinus (strain MIT 9313).